Reading from the N-terminus, the 89-residue chain is Small ribosomal subunit protein uS15 (89 aa).

The protein belongs to the universal ribosomal protein uS15 family. Part of the 30S ribosomal subunit. Forms a bridge to the 50S subunit in the 70S ribosome, contacting the 23S rRNA.

One of the primary rRNA binding proteins, it binds directly to 16S rRNA where it helps nucleate assembly of the platform of the 30S subunit by binding and bridging several RNA helices of the 16S rRNA. Functionally, forms an intersubunit bridge (bridge B4) with the 23S rRNA of the 50S subunit in the ribosome. The protein is Small ribosomal subunit protein uS15 of Colwellia psychrerythraea (strain 34H / ATCC BAA-681) (Vibrio psychroerythus).